We begin with the raw amino-acid sequence, 334 residues long: MKFIDQAIIHVIAGNGGNGCVSFRREKYIPKGGPDGGNGGDGGNIWLEANNNLNTLIDLRFKKKFQAQNGQNGSSRKSSGKKGDDIKIHVPIGTKVINYQTREIIGDLIQHKQKMLIAKGGWHGLGNARFKSSTNRTPRQSTLGSIGEKRDIQLELMLLADVGTLGMPNVGKSTLVTNISGAKTKISDYPFTTLHPVLGSVNIQKNKKFIIADIPGIIKGASYGAGLGIRFLKHLERCKLLLHIIDLVPQNNCHPSDNIKTVLNELKKYSLKLYNKPRWFIFNKIDLLSVEELNQIIKEIIFQFKIHEKYYLISSMKKIGIKKLCSDITKYLKK.

The Obg domain occupies 1–159 (MKFIDQAIIH…RDIQLELMLL (159 aa)). The interval 67–86 (AQNGQNGSSRKSSGKKGDDI) is disordered. Low complexity predominate over residues 68-77 (QNGQNGSSRK). The 174-residue stretch at 160 to 333 (ADVGTLGMPN…LCSDITKYLK (174 aa)) folds into the OBG-type G domain. GTP contacts are provided by residues 166-173 (GMPNVGKS), 191-195 (FTTLH), 213-216 (DIPG), 283-286 (NKID), and 314-316 (SSM). 2 residues coordinate Mg(2+): Ser-173 and Thr-193.

The protein belongs to the TRAFAC class OBG-HflX-like GTPase superfamily. OBG GTPase family. In terms of assembly, monomer. Mg(2+) serves as cofactor.

The protein resides in the cytoplasm. Its function is as follows. An essential GTPase which binds GTP, GDP and possibly (p)ppGpp with moderate affinity, with high nucleotide exchange rates and a fairly low GTP hydrolysis rate. Plays a role in control of the cell cycle, stress response, ribosome biogenesis and in those bacteria that undergo differentiation, in morphogenesis control. The polypeptide is GTPase Obg (Buchnera aphidicola subsp. Acyrthosiphon pisum (strain 5A)).